Consider the following 563-residue polypeptide: NAD(P)H-quinone oxidoreductase chain 4 (563 aa).

15 helical membrane passes run Phe25–Ile45, Trp56–Gly76, Val90–Pro110, Leu111–Phe131, Pro133–Val153, Leu157–Trp177, Phe189–Phe209, Gly230–Val250, Thr264–Met284, Phe298–Phe318, Met335–Leu355, Gln356–Asp376, Phe397–Val417, Ile438–Met458, and Val485–Met505.

It belongs to the complex I subunit 4 family.

Its subcellular location is the cellular thylakoid membrane. The catalysed reaction is a plastoquinone + NADH + (n+1) H(+)(in) = a plastoquinol + NAD(+) + n H(+)(out). The enzyme catalyses a plastoquinone + NADPH + (n+1) H(+)(in) = a plastoquinol + NADP(+) + n H(+)(out). In terms of biological role, NDH-1 shuttles electrons from NAD(P)H, via FMN and iron-sulfur (Fe-S) centers, to quinones in the respiratory chain. The immediate electron acceptor for the enzyme in this species is believed to be plastoquinone. Couples the redox reaction to proton translocation (for every two electrons transferred, four hydrogen ions are translocated across the cytoplasmic membrane), and thus conserves the redox energy in a proton gradient. This is NAD(P)H-quinone oxidoreductase chain 4 from Prochlorococcus marinus (strain MIT 9313).